The primary structure comprises 219 residues: 2-C-methyl-D-erythritol 4-phosphate cytidylyltransferase (219 aa).

It belongs to the IspD/TarI cytidylyltransferase family. IspD subfamily.

It carries out the reaction 2-C-methyl-D-erythritol 4-phosphate + CTP + H(+) = 4-CDP-2-C-methyl-D-erythritol + diphosphate. It participates in isoprenoid biosynthesis; isopentenyl diphosphate biosynthesis via DXP pathway; isopentenyl diphosphate from 1-deoxy-D-xylulose 5-phosphate: step 2/6. Catalyzes the formation of 4-diphosphocytidyl-2-C-methyl-D-erythritol from CTP and 2-C-methyl-D-erythritol 4-phosphate (MEP). The protein is 2-C-methyl-D-erythritol 4-phosphate cytidylyltransferase of Bacteroides thetaiotaomicron (strain ATCC 29148 / DSM 2079 / JCM 5827 / CCUG 10774 / NCTC 10582 / VPI-5482 / E50).